Reading from the N-terminus, the 295-residue chain is Oxidoreductase AN1597 (295 aa).

The protein belongs to the asaB hydroxylase/desaturase family.

The protein operates within secondary metabolite biosynthesis; terpenoid biosynthesis. Oxidoreductase; part of the gene cluster that mediates the biosynthesis of the diterpene ent-pimara-8(14),15-diene (PD). Within the cluster, the HMG-CoA reductase AN1593 functions in the mevalonate pathway, which produces isoprenoid precursors. The geranylgeranyl pyrophosphate (GGPP) synthase AN1592 is needed in the formation of GGPP, the precursor for diterpenes. Lastly, the pimaradiene synthase pbcA performs the 2 cyclization steps that convert GGPP to ent-pimara-8(14),15-diene. The putative roles of the remaining cluster enzymes in ent-pimara-8(14),15-diene biosynthesis is unclear. The cytochrome P450 monooxygenase AN1598, the glutathione S-transferase AN1595, the oxidoreductases AN1596 and AN1597 probably function as decorative enzymes. It is possible that in biological conditions the compound is oxidized to ent-pimara-8(14),15-dien-19-oic acid, which is a bioactive diterpene compound predominant in many plant extracts. The polypeptide is Oxidoreductase AN1597 (Emericella nidulans (strain FGSC A4 / ATCC 38163 / CBS 112.46 / NRRL 194 / M139) (Aspergillus nidulans)).